Consider the following 493-residue polypeptide: Glutamate--tRNA ligase (493 aa).

The 'HIGH' region motif lies at 10–20 (PSPTGDPHVGT). The 'KMSKS' region signature appears at 251-255 (KLSKR). K254 is a binding site for ATP.

It belongs to the class-I aminoacyl-tRNA synthetase family. Glutamate--tRNA ligase type 1 subfamily. In terms of assembly, monomer.

The protein localises to the cytoplasm. The enzyme catalyses tRNA(Glu) + L-glutamate + ATP = L-glutamyl-tRNA(Glu) + AMP + diphosphate. Its function is as follows. Catalyzes the attachment of glutamate to tRNA(Glu) in a two-step reaction: glutamate is first activated by ATP to form Glu-AMP and then transferred to the acceptor end of tRNA(Glu). The chain is Glutamate--tRNA ligase from Marinomonas sp. (strain MWYL1).